A 127-amino-acid polypeptide reads, in one-letter code: MEDADVYAISVEVAPRFLDDQSAPEDGRYAFAYTIRIHNQGRVAARLVARHWRITDANGRVEHVDGDGVIGEQPRLRPGEDFHYTSGVMLGTDHGTMQGHYDMVADDGTEFAAPVAPFVLAIPRTLH.

The region spanning 3 to 127 (DADVYAISVE…FVLAIPRTLH (125 aa)) is the ApaG domain.

The chain is Protein ApaG from Stenotrophomonas maltophilia (strain K279a).